We begin with the raw amino-acid sequence, 236 residues long: RING-H2 finger protein ATL7 (236 aa).

A helical membrane pass occupies residues 31–51; sequence AFIFSVPICFTFIVLFVLYVI. An RING-type; atypical zinc finger spans residues 111–153; that stretch reads CSVCLGDYQAEEKLQQMPSCGHTFHMECIDLWLTSHTTCPLCR. Residues 176 to 196 are compositionally biased toward polar residues; sequence ENSNGGEASTQPDSQSATEAI. The segment at 176–236 is disordered; it reads ENSNGGEAST…SDGCCTCRLG (61 aa). The span at 197 to 221 shows a compositional bias: basic and acidic residues; it reads SHTDDVEEGNRDSQEVSKETEENDR.

The protein belongs to the RING-type zinc finger family. ATL subfamily.

It is found in the membrane. The catalysed reaction is S-ubiquitinyl-[E2 ubiquitin-conjugating enzyme]-L-cysteine + [acceptor protein]-L-lysine = [E2 ubiquitin-conjugating enzyme]-L-cysteine + N(6)-ubiquitinyl-[acceptor protein]-L-lysine.. Its pathway is protein modification; protein ubiquitination. This chain is RING-H2 finger protein ATL7 (ATL7), found in Arabidopsis thaliana (Mouse-ear cress).